A 320-amino-acid chain; its full sequence is Putative polysaccharide deacetylase (320 aa).

Positions 69 to 303 (RSIESCFEYG…ITSKEGVWVA (235 aa)) constitute a NodB homology domain.

It belongs to the polysaccharide deacetylase family. Homodimer.

The protein localises to the prospore. Functionally, may deacetylate chitin. Required for spore formation. In Schizosaccharomyces pombe (strain 972 / ATCC 24843) (Fission yeast), this protein is Putative polysaccharide deacetylase.